Here is a 527-residue protein sequence, read N- to C-terminus: CTP synthase (527 aa).

The segment at 1–270 (MKYIFVTGGV…ADVLCQLLQL (270 aa)) is amidoligase domain. Ser12 serves as a coordination point for CTP. Ser12 serves as a coordination point for UTP. Residues 13-18 (GLGKGI) and Asp70 contribute to the ATP site. Residues Asp70 and Glu145 each coordinate Mg(2+). CTP-binding positions include 152–154 (DIE), 191–196 (KTKPTQ), and Lys227. Residues 191 to 196 (KTKPTQ) and Lys227 contribute to the UTP site. In terms of domain architecture, Glutamine amidotransferase type-1 spans 292-525 (TIGIVSKYGK…VEACLKNRGK (234 aa)). Gly349 provides a ligand contact to L-glutamine. Cys376 serves as the catalytic Nucleophile; for glutamine hydrolysis. L-glutamine-binding positions include 377–380 (LGFQ), Glu400, and Arg455. Catalysis depends on residues His498 and Glu500.

The protein belongs to the CTP synthase family. Homotetramer.

The catalysed reaction is UTP + L-glutamine + ATP + H2O = CTP + L-glutamate + ADP + phosphate + 2 H(+). It carries out the reaction L-glutamine + H2O = L-glutamate + NH4(+). The enzyme catalyses UTP + NH4(+) + ATP = CTP + ADP + phosphate + 2 H(+). Its pathway is pyrimidine metabolism; CTP biosynthesis via de novo pathway; CTP from UDP: step 2/2. Allosterically activated by GTP, when glutamine is the substrate; GTP has no effect on the reaction when ammonia is the substrate. The allosteric effector GTP functions by stabilizing the protein conformation that binds the tetrahedral intermediate(s) formed during glutamine hydrolysis. Inhibited by the product CTP, via allosteric rather than competitive inhibition. Its function is as follows. Catalyzes the ATP-dependent amination of UTP to CTP with either L-glutamine or ammonia as the source of nitrogen. Regulates intracellular CTP levels through interactions with the four ribonucleotide triphosphates. The polypeptide is CTP synthase (Methanospirillum hungatei JF-1 (strain ATCC 27890 / DSM 864 / NBRC 100397 / JF-1)).